Reading from the N-terminus, the 386-residue chain is Histone-lysine N-methyltransferase SETD7 (386 aa).

The span at 1 to 12 (MDSSDDEIACDE) shows a compositional bias: acidic residues. Residues 1–21 (MDSSDDEIACDEGDYKGAKDD) form a disordered region. MORN repeat units follow at residues 15–38 (YKGAKDDNDLPHGLGKVKFSSGDE), 39–61 (FIGAFEHGIKCGPGKFHFFDDST), 62–84 (LEGNYVDGELHGIGIYTNDDGSI), and 109–131 (FRGQYSEGVRCGLCFYYFPDGGS). The SET domain occupies 222-344 (ELVYAAPSKI…EGDELTVHYT (123 aa)). S-adenosyl-L-methionine contacts are provided by residues 234–236 (AGE), N304, and H305.

The protein belongs to the class V-like SAM-binding methyltransferase superfamily. Histone-lysine methyltransferase family. SET7 subfamily.

Its subcellular location is the nucleus. It localises to the chromosome. It carries out the reaction L-lysyl(4)-[histone H3] + S-adenosyl-L-methionine = N(6)-methyl-L-lysyl(4)-[histone H3] + S-adenosyl-L-homocysteine + H(+). The enzyme catalyses L-lysyl-[protein] + S-adenosyl-L-methionine = N(6)-methyl-L-lysyl-[protein] + S-adenosyl-L-homocysteine + H(+). Functionally, histone methyltransferase that specifically monomethylates 'Lys-4' of histone H3. H3 'Lys-4' methylation represents a specific tag for epigenetic transcriptional activation. Plays a central role in the transcriptional activation of genes. Also has methyltransferase activity toward non-histone proteins. The polypeptide is Histone-lysine N-methyltransferase SETD7 (setd7) (Halocynthia roretzi (Sea squirt)).